Reading from the N-terminus, the 239-residue chain is MEIQIIRCLQDNYSYLIVDKAKNIACVIDPSEAKPVIKYLEDKNIHLKYILNTHHHYDHVGGNKELKEKYGASVIGYKGDKDRIPEIDILVGDQDIWHEENFQAKIFHIPGHTLGHICFYFYNEESVFTGDTLFSLGCGKIFEGTYSQMYNSLMKIKALPEKTKIYCGHEYTKQNSKFCIAHDQDNENLKVKIKLIDEKLEKNLPTIPSTIKEELECNIFLRSGTEENFSKLRDLKDNF.

Histidine 54, histidine 56, aspartate 58, histidine 59, histidine 112, aspartate 131, and histidine 169 together coordinate Zn(2+).

This sequence belongs to the metallo-beta-lactamase superfamily. Glyoxalase II family. Monomer. It depends on Zn(2+) as a cofactor.

It carries out the reaction an S-(2-hydroxyacyl)glutathione + H2O = a 2-hydroxy carboxylate + glutathione + H(+). It functions in the pathway secondary metabolite metabolism; methylglyoxal degradation; (R)-lactate from methylglyoxal: step 2/2. Functionally, thiolesterase that catalyzes the hydrolysis of S-D-lactoyl-glutathione to form glutathione and D-lactic acid. This is Hydroxyacylglutathione hydrolase from Pelagibacter ubique (strain HTCC1062).